A 349-amino-acid polypeptide reads, in one-letter code: Adenine deaminase (349 aa).

Zn(2+) contacts are provided by histidine 24, histidine 26, and histidine 204. Glutamate 207 serves as the catalytic Proton donor. Aspartate 285 contacts Zn(2+). Aspartate 286 provides a ligand contact to substrate.

This sequence belongs to the metallo-dependent hydrolases superfamily. Adenosine and AMP deaminases family. Adenine deaminase type 2 subfamily. Requires Zn(2+) as cofactor.

The catalysed reaction is adenine + H2O + H(+) = hypoxanthine + NH4(+). In terms of biological role, catalyzes the hydrolytic deamination of adenine to hypoxanthine. Plays an important role in the purine salvage pathway and in nitrogen catabolism. The protein is Adenine deaminase of Trichlorobacter lovleyi (strain ATCC BAA-1151 / DSM 17278 / SZ) (Geobacter lovleyi).